The chain runs to 472 residues: MFEVVIGLEVHTQLNTKTKIFCSCATSFGEAPNTNVCPTCLALPGALPVLNEEAVKKAIAFGKAVNATINKKSVFNRKNYFYPDLPKAYQISQFDIPIVEKGELFINVKGENKRIGITRAHLEEDAGKNIHENNFSKVDLNRAGTPLLEIVSEPELRSSDEAVAYLKKLHSIIRFLDISDANMQEGSFRCDANVSIRPKGDTKLYTRVEIKNLNSFRFIQKAIEYEVKRQSEAWEDGTYEQEVVQETRLFDTTNLVTRSMRGKEEAAEYRYFPDPDLLPVLLKDEFLDIKIPELPDEKKARFIDELGIKESDAEVLISSLEMSRFFESLISQNLNSKLCVNWLNTELMGLLKGELTIENSPVDAQKLGVLIKRIEDGTISAKAAKDVLAFVFENTSVEIDEAIEKLGLKQVSDDSAIEAVIEQILNANADKVAEYKSGKDKLFGFFVGQTMKEGKGAFNPAKVNEILKTKLG.

Belongs to the GatB/GatE family. GatB subfamily. Heterotrimer of A, B and C subunits.

The catalysed reaction is L-glutamyl-tRNA(Gln) + L-glutamine + ATP + H2O = L-glutaminyl-tRNA(Gln) + L-glutamate + ADP + phosphate + H(+). It carries out the reaction L-aspartyl-tRNA(Asn) + L-glutamine + ATP + H2O = L-asparaginyl-tRNA(Asn) + L-glutamate + ADP + phosphate + 2 H(+). In terms of biological role, allows the formation of correctly charged Asn-tRNA(Asn) or Gln-tRNA(Gln) through the transamidation of misacylated Asp-tRNA(Asn) or Glu-tRNA(Gln) in organisms which lack either or both of asparaginyl-tRNA or glutaminyl-tRNA synthetases. The reaction takes place in the presence of glutamine and ATP through an activated phospho-Asp-tRNA(Asn) or phospho-Glu-tRNA(Gln). In Campylobacter jejuni subsp. jejuni serotype O:6 (strain 81116 / NCTC 11828), this protein is Aspartyl/glutamyl-tRNA(Asn/Gln) amidotransferase subunit B.